The chain runs to 1867 residues: Probable serine/threonine-protein kinase roco8 (1867 aa).

The region spanning 16 to 93 (SSDGLQIKDR…DDYIFYQFDN (78 aa)) is the DEP 1 domain. 2 disordered regions span residues 96-115 (NNNN…TTAT) and 121-225 (VSTK…NSFN). The span at 121-223 (VSTKIGSIGK…NSNSTYNSNS (103 aa)) shows a compositional bias: low complexity. Positions 264–342 (GDKGLKLQKK…NNNNGGGGVM (79 aa)) constitute a DEP 2 domain. 8 LRR repeats span residues 491 to 512 (RLDD…IINT), 515 to 536 (FLRI…ESIA), 540 to 561 (NLES…FSRL), 563 to 584 (LLTK…VFQL), 586 to 607 (NLEE…IGSL), 609 to 631 (SLEK…LGLL), 633 to 656 (RLKS…STLP), and 657 to 678 (LLEQ…ITSK). The Roc domain maps to 693-941 (GTETLSHIKL…NEIIQTLLNQ (249 aa)). Disordered stretches follow at residues 763–813 (QNGI…KKRP) and 942–961 (SNNN…KQSN). The segment covering 768-793 (TSSSNLNLSTGTLPPPTQLSSSTSEL) has biased composition (low complexity). A COR domain is found at 974 to 1111 (PSIYITLETN…ILYTLKNNSN (138 aa)). Residues 1163–1207 (SPSLSLSNSSQSVFTNPNNNNNNKSEQQQQQQQQQQQPQPISTSP) form a disordered region. One can recognise a Protein kinase domain in the interval 1456 to 1864 (LIYQEEIGVG…TLNEIKDSTI (409 aa)). Residues 1462 to 1470 (IGVGGFSRV) and K1483 each bind ATP. The segment at 1509 to 1546 (SNSSLSISLSSSTSSLSPPIVNNNNNNNNLNNNLNNLN) is disordered. The active-site Proton acceptor is the D1721.

The protein belongs to the protein kinase superfamily. TKL Ser/Thr protein kinase family. ROCO subfamily.

The enzyme catalyses L-seryl-[protein] + ATP = O-phospho-L-seryl-[protein] + ADP + H(+). It catalyses the reaction L-threonyl-[protein] + ATP = O-phospho-L-threonyl-[protein] + ADP + H(+). The chain is Probable serine/threonine-protein kinase roco8 (roco8) from Dictyostelium discoideum (Social amoeba).